The primary structure comprises 165 residues: UPF0303 protein Bphyt_1734 (165 aa).

This sequence belongs to the UPF0303 family.

The chain is UPF0303 protein Bphyt_1734 from Paraburkholderia phytofirmans (strain DSM 17436 / LMG 22146 / PsJN) (Burkholderia phytofirmans).